Reading from the N-terminus, the 147-residue chain is Microtubule-associated protein 1 light chain 3 gamma (147 aa).

Serine 93 and serine 96 each carry phosphoserine; by TBK1. A lipid anchor (Phosphatidylethanolamine amidated glycine; alternate) is attached at glycine 126. Glycine 126 carries the Phosphatidylserine amidated glycine; alternate lipid modification. Residues 127 to 147 (CLESAAPRDGSSLEDRPCNPL) constitute a propeptide, removed in mature form.

It belongs to the ATG8 family. In terms of assembly, 3 different light chains, LC1 (a cleavage product of MAP1B), LC2 (a cleavage product of MAP1A) and LC3 (produced by one of the MAP1LC3 genes), can associate with the MAP1A or MAP1B heavy chains. Interacts with TP53INP1 and TP53INP2. Interacts with CALCOCO2. Interacts with TECPR2. Interacts with TBC1D5. Found in a complex with UBQLN1 and UBQLN2. Interacts with UBQLN4 (via STI1 1 and 2 domains). Interacts with UBQLN1 in the presence of UBQLN4. Interacts with TRIM5. Interacts with ATG13. Interacts with MEFV and TRIM21. Interacts with WDR81; recruits MAP1LC3C to ubiquitinated protein aggregates in the aggrephagy process. Interacts with MOAP1 (via LIR motif). Interacts with reticulophagy regulators RETREG1, RETREG2 and RETREG3. Interacts with TAX1BP1. Interacts with IRGM. Interacts with SPART. Post-translationally, the precursor molecule is cleaved by ATG4 (ATG4A, ATG4B, ATG4C or ATG4D) to expose the glycine at the C-terminus and form the cytosolic form, LC3-I. The processed form is then activated by APG7L/ATG7, transferred to ATG3 and conjugated to phosphatidylethanolamine (PE) phospholipid to form the membrane-bound form, LC3-II. During non-canonical autophagy, the processed form is conjugated to phosphatidylserine (PS) phospholipid. ATG4 proteins also mediate the delipidation of PE-conjugated forms. In addition, ATG4B and ATG4D mediate delipidation of ATG8 proteins conjugated to PS during non-canonical autophagy. (Microbial infection) The Legionella effector RavZ is a deconjugating enzyme that hydrolyzes the amide bond between the C-terminal glycine residue and an adjacent aromatic residue in ATG8 proteins conjugated to phosphatidylethanolamine (PE), producing an ATG8 protein that is resistant to reconjugation by the host machinery due to the cleavage of the reactive C-terminal glycine. RavZ is also able to mediate delipidation of ATG8 proteins conjugated to phosphatidylserine (PS). In terms of processing, phosphorylation at Ser-96 and Ser-98 by TBK1 prevents interaction with ATG4 (ATG4A, ATG4B, ATG4C or ATG4D). Phosphorylation by TBK1 on autophagosomes prevents their delipidation by ATG4 and premature removal from nascent autophagosomes. As to expression, most abundant in placenta, lung and ovary.

The protein resides in the cytoplasmic vesicle. Its subcellular location is the autophagosome membrane. It is found in the endomembrane system. The protein localises to the cytoplasm. It localises to the cytoskeleton. Functionally, ubiquitin-like modifier that plays a crucial role in antibacterial autophagy (xenophagy) through the selective binding of CALCOCO2. Recruits all ATG8 family members to infecting bacteria such as S.typhimurium. May also play a role in aggrephagy, the macroautophagic degradation of ubiquitinated and aggregated proteins. This is Microtubule-associated protein 1 light chain 3 gamma (MAP1LC3C) from Homo sapiens (Human).